Here is a 216-residue protein sequence, read N- to C-terminus: FMN-dependent NADH:quinone oxidoreductase 2 (216 aa).

FMN is bound by residues Ser9, 15-17 (SVS), 96-99 (MYNF), and 140-143 (SRGG).

This sequence belongs to the azoreductase type 1 family. Homodimer. Requires FMN as cofactor.

It carries out the reaction 2 a quinone + NADH + H(+) = 2 a 1,4-benzosemiquinone + NAD(+). The enzyme catalyses N,N-dimethyl-1,4-phenylenediamine + anthranilate + 2 NAD(+) = 2-(4-dimethylaminophenyl)diazenylbenzoate + 2 NADH + 2 H(+). Quinone reductase that provides resistance to thiol-specific stress caused by electrophilic quinones. In terms of biological role, also exhibits azoreductase activity. Catalyzes the reductive cleavage of the azo bond in aromatic azo compounds to the corresponding amines. This Xanthomonas axonopodis pv. citri (strain 306) protein is FMN-dependent NADH:quinone oxidoreductase 2.